The chain runs to 351 residues: Nicotinate-nucleotide--dimethylbenzimidazole phosphoribosyltransferase (351 aa).

The Proton acceptor role is filled by Glu317.

This sequence belongs to the CobT family.

It carries out the reaction 5,6-dimethylbenzimidazole + nicotinate beta-D-ribonucleotide = alpha-ribazole 5'-phosphate + nicotinate + H(+). The protein operates within nucleoside biosynthesis; alpha-ribazole biosynthesis; alpha-ribazole from 5,6-dimethylbenzimidazole: step 1/2. In terms of biological role, catalyzes the synthesis of alpha-ribazole-5'-phosphate from nicotinate mononucleotide (NAMN) and 5,6-dimethylbenzimidazole (DMB). This is Nicotinate-nucleotide--dimethylbenzimidazole phosphoribosyltransferase from Bradyrhizobium sp. (strain BTAi1 / ATCC BAA-1182).